The primary structure comprises 208 residues: Uracil phosphoribosyltransferase (208 aa).

5-phospho-alpha-D-ribose 1-diphosphate-binding positions include R78, R103, and 130–138 (DPMLATGGS). Uracil is bound by residues I193 and 198 to 200 (GDA). D199 contributes to the 5-phospho-alpha-D-ribose 1-diphosphate binding site.

Belongs to the UPRTase family. Requires Mg(2+) as cofactor.

The enzyme catalyses UMP + diphosphate = 5-phospho-alpha-D-ribose 1-diphosphate + uracil. It participates in pyrimidine metabolism; UMP biosynthesis via salvage pathway; UMP from uracil: step 1/1. With respect to regulation, allosterically activated by GTP. In terms of biological role, catalyzes the conversion of uracil and 5-phospho-alpha-D-ribose 1-diphosphate (PRPP) to UMP and diphosphate. The chain is Uracil phosphoribosyltransferase from Shewanella halifaxensis (strain HAW-EB4).